A 459-amino-acid chain; its full sequence is UDP-N-acetylmuramate--L-alanine ligase (459 aa).

118–124 contacts ATP; sequence GTHGKTT.

Belongs to the MurCDEF family.

It localises to the cytoplasm. The enzyme catalyses UDP-N-acetyl-alpha-D-muramate + L-alanine + ATP = UDP-N-acetyl-alpha-D-muramoyl-L-alanine + ADP + phosphate + H(+). It functions in the pathway cell wall biogenesis; peptidoglycan biosynthesis. In terms of biological role, cell wall formation. This Agathobacter rectalis (strain ATCC 33656 / DSM 3377 / JCM 17463 / KCTC 5835 / VPI 0990) (Eubacterium rectale) protein is UDP-N-acetylmuramate--L-alanine ligase.